A 240-amino-acid chain; its full sequence is 2,3-bisphosphoglycerate-dependent phosphoglycerate mutase (240 aa).

Substrate-binding positions include 5–12, 18–19, R57, 84–87, K95, 111–112, and 180–181; these read RHGESVWN, TG, ERHY, RR, and GN. The Tele-phosphohistidine intermediate role is filled by H6. The active-site Proton donor/acceptor is E84.

It belongs to the phosphoglycerate mutase family. BPG-dependent PGAM subfamily. Homodimer.

The enzyme catalyses (2R)-2-phosphoglycerate = (2R)-3-phosphoglycerate. It functions in the pathway carbohydrate degradation; glycolysis; pyruvate from D-glyceraldehyde 3-phosphate: step 3/5. In terms of biological role, catalyzes the interconversion of 2-phosphoglycerate and 3-phosphoglycerate. This is 2,3-bisphosphoglycerate-dependent phosphoglycerate mutase from Nitrosococcus oceani (strain ATCC 19707 / BCRC 17464 / JCM 30415 / NCIMB 11848 / C-107).